A 410-amino-acid chain; its full sequence is MFVRALSLRDFRSWDALGLTLRPGCTVFVGPNGHGKTNVLEALGYLSTLSSHRVSSDAPLIRTGTGQAFAGATVVNAGRELTVDLELNEGKSNRARINQSPTRRPREILGILQTVLFAPEDLSLVRGDPGDRRRYLDELLTSRIPRMAAVRADYDRVLRQRSALLKTAGGALRRVSRGSGRPSEDGASALATLEVWDGHLAAHGAQLLAGRLHLVHDLAPHLAESYQSLAPESRPASIRYRSSLGSSLPPEFTEPARVPEAGDIAFLEERFLQELSVMRSKEIERGVCLVGPHRDDLELHLGDTPAKGFASHGESWSFALSLRLAGFALLRSDGSDPVLMLDDVFAELDRRRRRALAKVALDAEQVLITAAVPEDVPEELDAVRFGVEARDTDRGRISHIVEEPEDRSDG.

An ATP-binding site is contributed by 30–37 (GPNGHGKT).

This sequence belongs to the RecF family.

Its subcellular location is the cytoplasm. The RecF protein is involved in DNA metabolism; it is required for DNA replication and normal SOS inducibility. RecF binds preferentially to single-stranded, linear DNA. It also seems to bind ATP. The chain is DNA replication and repair protein RecF from Rhodococcus jostii (strain RHA1).